A 67-amino-acid chain; its full sequence is Large ribosomal subunit protein uL29 (67 aa).

The protein belongs to the universal ribosomal protein uL29 family.

The chain is Large ribosomal subunit protein uL29 from Ruminiclostridium cellulolyticum (strain ATCC 35319 / DSM 5812 / JCM 6584 / H10) (Clostridium cellulolyticum).